A 285-amino-acid chain; its full sequence is Zinc transporter ZupT (285 aa).

Helical transmembrane passes span 13-33 (AFLL…IAFF), 41-61 (FLCV…MIEM), and 80-100 (WITV…DKFV). 2 residues coordinate Fe(2+): asparagine 153 and glutamate 156. Glutamate 156 contributes to the Zn(2+) binding site. The chain crosses the membrane as a helical span at residues 160 to 180 (TFVSALEGASLAIPITIAIAI). Zn(2+) is bound at residue histidine 181. Fe(2+) contacts are provided by asparagine 182, glutamate 185, and glutamate 214. Glutamate 185 contributes to the Zn(2+) binding site. 3 helical membrane-spanning segments follow: residues 204 to 224 (FLYS…GYTL), 228 to 248 (IFND…MVFI), and 265 to 285 (LAIY…LLFI).

Belongs to the ZIP transporter (TC 2.A.5) family. ZupT subfamily.

Its subcellular location is the cell membrane. It carries out the reaction Zn(2+)(in) = Zn(2+)(out). Mediates zinc uptake. May also transport other divalent cations. The chain is Zinc transporter ZupT from Clostridium perfringens (strain 13 / Type A).